Here is a 328-residue protein sequence, read N- to C-terminus: Biotin synthase (328 aa).

Positions 41–260 (TAIETASLLS…VALARILMPA (220 aa)) constitute a Radical SAM core domain. Residues Cys-56, Cys-60, and Cys-63 each contribute to the [4Fe-4S] cluster site. [2Fe-2S] cluster is bound by residues Cys-100, Cys-131, Cys-191, and Arg-264.

Belongs to the radical SAM superfamily. Biotin synthase family. As to quaternary structure, homodimer. Requires [4Fe-4S] cluster as cofactor. The cofactor is [2Fe-2S] cluster.

It carries out the reaction (4R,5S)-dethiobiotin + (sulfur carrier)-SH + 2 reduced [2Fe-2S]-[ferredoxin] + 2 S-adenosyl-L-methionine = (sulfur carrier)-H + biotin + 2 5'-deoxyadenosine + 2 L-methionine + 2 oxidized [2Fe-2S]-[ferredoxin]. Its pathway is cofactor biosynthesis; biotin biosynthesis; biotin from 7,8-diaminononanoate: step 2/2. Its function is as follows. Catalyzes the conversion of dethiobiotin (DTB) to biotin by the insertion of a sulfur atom into dethiobiotin via a radical-based mechanism. This is Biotin synthase from Cereibacter sphaeroides (strain ATCC 17029 / ATH 2.4.9) (Rhodobacter sphaeroides).